The primary structure comprises 151 residues: Protein InSETG-4 (151 aa).

The protein resides in the cytoplasm. Its subcellular location is the cytosol. In Homo sapiens (Human), this protein is Protein InSETG-4 (InSet4-G).